The primary structure comprises 63 residues: MADKKLKVTLKRGLIGVSDGKIRTIKALGLKKRSHSVIKNDTPEIRGMIDKVSNLVEVEELEA.

The protein belongs to the universal ribosomal protein uL30 family. In terms of assembly, part of the 50S ribosomal subunit.

The chain is Large ribosomal subunit protein uL30 from Natranaerobius thermophilus (strain ATCC BAA-1301 / DSM 18059 / JW/NM-WN-LF).